The primary structure comprises 190 residues: Translation initiation factor IF-3 (190 aa).

This sequence belongs to the IF-3 family. Monomer.

It localises to the cytoplasm. Functionally, IF-3 binds to the 30S ribosomal subunit and shifts the equilibrium between 70S ribosomes and their 50S and 30S subunits in favor of the free subunits, thus enhancing the availability of 30S subunits on which protein synthesis initiation begins. This is Translation initiation factor IF-3 from Prochlorococcus marinus subsp. pastoris (strain CCMP1986 / NIES-2087 / MED4).